The primary structure comprises 620 residues: Chaperone protein HscA homolog (620 aa).

Belongs to the heat shock protein 70 family.

Its function is as follows. Chaperone involved in the maturation of iron-sulfur cluster-containing proteins. Has a low intrinsic ATPase activity which is markedly stimulated by HscB. In Pseudomonas syringae pv. syringae (strain B728a), this protein is Chaperone protein HscA homolog.